We begin with the raw amino-acid sequence, 435 residues long: Transcriptional enhancer factor TEF-5 (435 aa).

Over residues 1–12 (MASNSWNASSSP) the composition is skewed to polar residues. The tract at residues 1–34 (MASNSWNASSSPGEAREDGPEGLDKGLDNDAEGV) is disordered. N-acetylalanine is present on alanine 2. Residues 14–28 (EAREDGPEGLDKGLD) are compositionally biased toward basic and acidic residues. Positions 28 to 104 (DNDAEGVWSP…QVLARKKVRE (77 aa)) form a DNA-binding region, TEA. Phosphoserine is present on serine 148. The segment at 173-435 (GPSQDIKPFA…QHHVYKLVKD (263 aa)) is transcriptional activation.

Interacts with YAP1 and WWTR1/TAZ. As to expression, preferentially expressed in the placenta.

The protein localises to the nucleus. Its function is as follows. Transcription factor which plays a key role in the Hippo signaling pathway, a pathway involved in organ size control and tumor suppression by restricting proliferation and promoting apoptosis. The core of this pathway is composed of a kinase cascade wherein MST1/MST2, in complex with its regulatory protein SAV1, phosphorylates and activates LATS1/2 in complex with its regulatory protein MOB1, which in turn phosphorylates and inactivates YAP1 oncoprotein and WWTR1/TAZ. Acts by mediating gene expression of YAP1 and WWTR1/TAZ, thereby regulating cell proliferation, migration and epithelial mesenchymal transition (EMT) induction. Binds to multiple functional elements of the human chorionic somatomammotropin-B gene enhancer. The protein is Transcriptional enhancer factor TEF-5 (TEAD3) of Homo sapiens (Human).